The following is a 64-amino-acid chain: MSGREGGKKKPLKAPKKEQSEMDDDDVAFKQKQKEQQKALDAAKQKASKGGPLLQGGIKKSGKK.

A disordered region spans residues methionine 1–lysine 64. Residues valine 27–lysine 44 show a composition bias toward basic and acidic residues.

It belongs to the TMA7 family.

This is Translation machinery-associated protein 7 homolog from Anopheles funestus (African malaria mosquito).